Here is a 111-residue protein sequence, read N- to C-terminus: UPF0342 protein SAG1376 (111 aa).

Residues glutamine 52 to glutamine 63 show a composition bias toward polar residues. The disordered stretch occupies residues glutamine 52–lysine 71.

The protein belongs to the UPF0342 family.

The sequence is that of UPF0342 protein SAG1376 from Streptococcus agalactiae serotype V (strain ATCC BAA-611 / 2603 V/R).